The following is a 259-amino-acid chain: 12alpha-hydroxysteroid dehydrogenase (259 aa).

The active-site Proton acceptor is Tyr162.

The protein belongs to the short-chain dehydrogenases/reductases (SDR) family. As to quaternary structure, homotetramer.

It catalyses the reaction cholate + NADP(+) = 3alpha,7alpha-dihydroxy-12-oxo-5beta-cholanate + NADPH + H(+). The enzyme catalyses deoxycholate + NADP(+) = 12-dehydrodeoxycholate + NADPH + H(+). In terms of biological role, catalyzes the oxidation of the 12alpha-hydroxy group of bile acids, like cholate and deoxycholate. Is also able to catalyze the reverse reaction in vitro. Is likely involved in an epimerization pathway of bile acids that converts hydroxy groups from alpha to beta positions via stable oxo-intermediates, which occurs in the human gut. The chain is 12alpha-hydroxysteroid dehydrogenase from Clostridium sp. (strain ATCC 29733 / VPI C48-50).